A 165-amino-acid polypeptide reads, in one-letter code: Chorismate pyruvate-lyase (165 aa).

Substrate contacts are provided by Met-35, Arg-77, Leu-115, and Glu-156.

The protein belongs to the UbiC family. As to quaternary structure, monomer.

The protein localises to the cytoplasm. It carries out the reaction chorismate = 4-hydroxybenzoate + pyruvate. It participates in cofactor biosynthesis; ubiquinone biosynthesis. Its function is as follows. Removes the pyruvyl group from chorismate, with concomitant aromatization of the ring, to provide 4-hydroxybenzoate (4HB) for the ubiquinone pathway. The polypeptide is Chorismate pyruvate-lyase (Escherichia coli O7:K1 (strain IAI39 / ExPEC)).